We begin with the raw amino-acid sequence, 236 residues long: uncharacterized protein (236 aa).

A GP-PDE domain is found at 4–236 (QFLIAYRGYS…VKFQITAQIY (233 aa)).

It to glycerophosphoryl diester phosphodiesterases (EC 3.1.4.46). The protein to M.genitalium MG293.

This is an uncharacterized protein from Mycoplasma genitalium (strain ATCC 33530 / DSM 19775 / NCTC 10195 / G37) (Mycoplasmoides genitalium).